Reading from the N-terminus, the 193-residue chain is 3-isopropylmalate dehydratase small subunit (193 aa).

This sequence belongs to the LeuD family. LeuD type 1 subfamily. In terms of assembly, heterodimer of LeuC and LeuD.

The catalysed reaction is (2R,3S)-3-isopropylmalate = (2S)-2-isopropylmalate. It participates in amino-acid biosynthesis; L-leucine biosynthesis; L-leucine from 3-methyl-2-oxobutanoate: step 2/4. Catalyzes the isomerization between 2-isopropylmalate and 3-isopropylmalate, via the formation of 2-isopropylmaleate. This Bacillus cereus (strain ATCC 10987 / NRS 248) protein is 3-isopropylmalate dehydratase small subunit.